An 848-amino-acid polypeptide reads, in one-letter code: Translation initiation factor IF-2 (848 aa).

The segment at 90 to 253 (RTYIKRAELQ…PKEKRHAFER (164 aa)) is disordered. A compositionally biased stretch (low complexity) spans 105–170 (EAPAPEEPVQ…SAEPAIAPED (66 aa)). Basic residues-rich tracts occupy residues 204 to 215 (PKKKQAGHRGPR) and 236 to 248 (KPLR…KEKR). Positions 344-511 (KRAPVVSVMG…AVLLQAEILE (168 aa)) constitute a tr-type G domain. A G1 region spans residues 353 to 360 (GHVDHGKT). 353–360 (GHVDHGKT) serves as a coordination point for GTP. The tract at residues 378–382 (GITQH) is G2. The interval 399 to 402 (DTPG) is G3. Residues 399 to 403 (DTPGH) and 453 to 456 (NKMD) contribute to the GTP site. The G4 stretch occupies residues 453–456 (NKMD). Residues 489–491 (SAH) are G5.

Belongs to the TRAFAC class translation factor GTPase superfamily. Classic translation factor GTPase family. IF-2 subfamily.

The protein resides in the cytoplasm. Functionally, one of the essential components for the initiation of protein synthesis. Protects formylmethionyl-tRNA from spontaneous hydrolysis and promotes its binding to the 30S ribosomal subunits. Also involved in the hydrolysis of GTP during the formation of the 70S ribosomal complex. The polypeptide is Translation initiation factor IF-2 (Marinobacter nauticus (strain ATCC 700491 / DSM 11845 / VT8) (Marinobacter aquaeolei)).